The primary structure comprises 894 residues: Valine--tRNA ligase (894 aa).

The 'HIGH' region signature appears at 48–58 (PNVTGFLHMGH). The 'KMSKS' region signature appears at 527–531 (KMSKS). Position 530 (Lys530) interacts with ATP. Residues 827–852 (LVDFDEEVKRINKSIEKLTRDIGMLS) are a coiled coil.

The protein belongs to the class-I aminoacyl-tRNA synthetase family. ValS type 1 subfamily. Monomer.

It is found in the cytoplasm. It catalyses the reaction tRNA(Val) + L-valine + ATP = L-valyl-tRNA(Val) + AMP + diphosphate. Functionally, catalyzes the attachment of valine to tRNA(Val). As ValRS can inadvertently accommodate and process structurally similar amino acids such as threonine, to avoid such errors, it has a 'posttransfer' editing activity that hydrolyzes mischarged Thr-tRNA(Val) in a tRNA-dependent manner. This Bdellovibrio bacteriovorus (strain ATCC 15356 / DSM 50701 / NCIMB 9529 / HD100) protein is Valine--tRNA ligase.